We begin with the raw amino-acid sequence, 328 residues long: GTP 3',8-cyclase (328 aa).

The Radical SAM core domain maps to 1–229; it reads MNQVDYLRIS…DAQVRGSGPA (229 aa). Residue R8 coordinates GTP. 2 residues coordinate [4Fe-4S] cluster: C15 and C19. Y21 serves as a coordination point for S-adenosyl-L-methionine. C22 is a [4Fe-4S] cluster binding site. A GTP-binding site is contributed by R60. G64 contacts S-adenosyl-L-methionine. T91 contributes to the GTP binding site. Residue S115 coordinates S-adenosyl-L-methionine. K155 provides a ligand contact to GTP. An S-adenosyl-L-methionine-binding site is contributed by M189. Positions 252 and 255 each coordinate [4Fe-4S] cluster. A GTP-binding site is contributed by 257-259; sequence RMR. C269 lines the [4Fe-4S] cluster pocket.

It belongs to the radical SAM superfamily. MoaA family. In terms of assembly, monomer and homodimer. [4Fe-4S] cluster is required as a cofactor.

The catalysed reaction is GTP + AH2 + S-adenosyl-L-methionine = (8S)-3',8-cyclo-7,8-dihydroguanosine 5'-triphosphate + 5'-deoxyadenosine + L-methionine + A + H(+). It participates in cofactor biosynthesis; molybdopterin biosynthesis. Functionally, catalyzes the cyclization of GTP to (8S)-3',8-cyclo-7,8-dihydroguanosine 5'-triphosphate. This is GTP 3',8-cyclase from Trichormus variabilis (strain ATCC 29413 / PCC 7937) (Anabaena variabilis).